The sequence spans 378 residues: Mating-type protein MAT-1 (378 aa).

A DNA-binding region (alpha box) is located at residues 60 to 117; the sequence is KAKKALNAFVGFRCYYIAIPAFKPWPMKKLSNLISLLWEGDPNKSLWSLMAKAWSNIR. A disordered region spans residues 235-256; the sequence is SQVDQARVAARNRRRAKRQSAR. Over residues 244 to 253 the composition is skewed to basic residues; that stretch reads ARNRRRAKRQ.

The protein belongs to the MATALPHA1 family.

It is found in the nucleus. In terms of biological role, mating type proteins are sequence specific DNA-binding proteins that act as master switches in fungal differentiation by controlling gene expression in a cell type-specific fashion. Transcriptional activator that induces the transcription of alpha-specific genes. The polypeptide is Mating-type protein MAT-1 (MAT1) (Cochliobolus ellisii (Curvularia ellisii)).